Reading from the N-terminus, the 513-residue chain is Ectonucleoside triphosphate diphosphohydrolase 1 (513 aa).

Residues 1–16 (MEDRRESELKVFCSKN) are Cytoplasmic-facing. A helical transmembrane segment spans residues 17–37 (ILSILGFSCIIAVIALLALGL). At 38–481 (TQNKALPENV…SPPLPHSTYV (444 aa)) the chain is on the extracellular side. N73 is a glycosylation site (N-linked (GlcNAc...) asparagine). Residue E174 is the Proton acceptor of the active site. Residues N227 and N245 are each glycosylated (N-linked (GlcNAc...) asparagine). Cystine bridges form between C255-C300 and C281-C327. N307 and N336 each carry an N-linked (GlcNAc...) asparagine glycan. A disulfide bridge connects residues C340 and C345. N373 carries N-linked (GlcNAc...) asparagine glycosylation. Cysteines 393 and 416 form a disulfide. A glycan (N-linked (GlcNAc...) asparagine) is linked at N460. The chain crosses the membrane as a helical span at residues 482–502 (FLMVLFSLILLAVIIVGIVVF). Over 503 to 513 (HKPSYFWKDMV) the chain is Cytoplasmic.

It belongs to the GDA1/CD39 NTPase family. Homodimer; disulfide-linked. Ca(2+) serves as cofactor. The cofactor is Mg(2+). N-glycosylated. Post-translationally, the N-terminus is blocked. In terms of processing, palmitoylated on Cys-13; which is required for caveola targeting.

It localises to the membrane. The protein resides in the caveola. The enzyme catalyses a ribonucleoside 5'-triphosphate + 2 H2O = a ribonucleoside 5'-phosphate + 2 phosphate + 2 H(+). It catalyses the reaction a ribonucleoside 5'-triphosphate + H2O = a ribonucleoside 5'-diphosphate + phosphate + H(+). The catalysed reaction is a ribonucleoside 5'-diphosphate + H2O = a ribonucleoside 5'-phosphate + phosphate + H(+). It carries out the reaction ATP + 2 H2O = AMP + 2 phosphate + 2 H(+). The enzyme catalyses ATP + H2O = ADP + phosphate + H(+). It catalyses the reaction ADP + H2O = AMP + phosphate + H(+). The catalysed reaction is CTP + 2 H2O = CMP + 2 phosphate + 2 H(+). It carries out the reaction CTP + H2O = CDP + phosphate + H(+). The enzyme catalyses CDP + H2O = CMP + phosphate + H(+). It catalyses the reaction GTP + 2 H2O = GMP + 2 phosphate + 2 H(+). The catalysed reaction is GTP + H2O = GDP + phosphate + H(+). It carries out the reaction GDP + H2O = GMP + phosphate + H(+). The enzyme catalyses ITP + 2 H2O = IMP + 2 phosphate + 2 H(+). It catalyses the reaction ITP + H2O = IDP + phosphate + H(+). The catalysed reaction is IDP + H2O = IMP + phosphate + H(+). It carries out the reaction UTP + 2 H2O = UMP + 2 phosphate + 2 H(+). The enzyme catalyses UTP + H2O = UDP + phosphate + H(+). It catalyses the reaction UDP + H2O = UMP + phosphate + H(+). Functionally, catalyzes the hydrolysis of both di- and triphosphate nucleotides (NDPs and NTPs) and hydrolyze NTPs to nucleotide monophosphates (NMPs) in two distinct successive phosphate-releasing steps, with NDPs as intermediates and participates in the regulation of extracellular levels of nucleotides. By hydrolyzing proinflammatory ATP and platelet-activating ADP to AMP, it blocks platelet aggregation and supports blood flow. This Bos taurus (Bovine) protein is Ectonucleoside triphosphate diphosphohydrolase 1.